We begin with the raw amino-acid sequence, 322 residues long: Major serine/threonine-protein phosphatase PP2A-2 catalytic subunit (322 aa).

Positions 70, 72, 98, and 130 each coordinate Mn(2+). The active-site Proton donor is the His131. Positions 180 and 254 each coordinate Mn(2+). Leu322 carries the post-translational modification Leucine methyl ester.

It belongs to the PPP phosphatase family. PP-2A subfamily. The cofactor is Mn(2+).

The enzyme catalyses O-phospho-L-seryl-[protein] + H2O = L-seryl-[protein] + phosphate. It carries out the reaction O-phospho-L-threonyl-[protein] + H2O = L-threonyl-[protein] + phosphate. In terms of biological role, essential role in cell cycle control. PP2A may be involved in controlling the entry into mitosis, possibly acting as an inhibitor. This Schizosaccharomyces pombe (strain 972 / ATCC 24843) (Fission yeast) protein is Major serine/threonine-protein phosphatase PP2A-2 catalytic subunit (ppa2).